A 151-amino-acid chain; its full sequence is Large ribosomal subunit protein bL9 (151 aa).

The protein belongs to the bacterial ribosomal protein bL9 family.

Binds to the 23S rRNA. This Prochlorococcus marinus (strain MIT 9215) protein is Large ribosomal subunit protein bL9.